Reading from the N-terminus, the 503-residue chain is Transmembrane protein 184C (503 aa).

7 helical membrane-spanning segments follow: residues 17-37, 48-68, 83-103, 115-135, 212-232, 254-274, and 287-307; these read LLIL…IWEF, VWFI…CGIL, IIRI…ALKY, ECYE…YLTI, YLVI…LLFY, VVFV…VGVI, and AVAT…AAIA. Disordered regions lie at residues 358-391 and 479-503; these read PKKK…SPVG and SPKP…STDS. The segment covering 373-388 has biased composition (low complexity); that stretch reads SSLLSASSQDSSKPSS. A compositionally biased stretch (polar residues) spans 494–503; sequence PEGSDSSTDS.

Belongs to the TMEM184 family.

It localises to the membrane. Functionally, possible tumor suppressor which may play a role in cell growth. In Rattus norvegicus (Rat), this protein is Transmembrane protein 184C (Tmem184c).